A 360-amino-acid polypeptide reads, in one-letter code: Probable cinnamyl alcohol dehydrogenase 6 (360 aa).

Residue cysteine 48 coordinates Zn(2+). Threonine 50 is an NADP(+) binding site. The Zn(2+) site is built by histidine 70, glutamate 71, cysteine 101, cysteine 104, cysteine 107, cysteine 115, and cysteine 164. Residues threonine 168, glycine 192–glycine 197, serine 215–lysine 220, threonine 255, glycine 279, and serine 302–threonine 304 contribute to the NADP(+) site.

The protein belongs to the zinc-containing alcohol dehydrogenase family. Homodimer. Zn(2+) is required as a cofactor.

It carries out the reaction (E)-cinnamyl alcohol + NADP(+) = (E)-cinnamaldehyde + NADPH + H(+). It catalyses the reaction (E)-coniferol + NADP(+) = (E)-coniferaldehyde + NADPH + H(+). The catalysed reaction is (E)-sinapyl alcohol + NADP(+) = (E)-sinapaldehyde + NADPH + H(+). The enzyme catalyses (E)-4-coumaroyl alcohol + NADP(+) = (E)-4-coumaraldehyde + NADPH + H(+). It carries out the reaction (E)-caffeyl alcohol + NADP(+) = (E)-caffeyl aldehyde + NADPH + H(+). It functions in the pathway aromatic compound metabolism; phenylpropanoid biosynthesis. Its function is as follows. Involved in lignin biosynthesis. Catalyzes the final step specific for the production of lignin monomers. Catalyzes the NADPH-dependent reduction of coniferaldehyde, 5-hydroxyconiferaldehyde, sinapaldehyde, 4-coumaraldehyde and caffeyl aldehyde to their respective alcohols. The polypeptide is Probable cinnamyl alcohol dehydrogenase 6 (Oryza sativa subsp. japonica (Rice)).